We begin with the raw amino-acid sequence, 77 residues long: uncharacterized protein (77 aa).

In terms of domain architecture, HTH cro/C1-type spans 13–67 (VLQYMVNNDYSLNQLALEIGVSPATLSRVLNGERRPGQLVIGKMLHYFNLKFEDL). A DNA-binding region (H-T-H motif) is located at residues 24–43 (LNQLALEIGVSPATLSRVLN).

It localises to the cytoplasm. This is an uncharacterized protein from Bacillus subtilis (strain 168).